The primary structure comprises 335 residues: Beta-ketoacyl-[acyl-carrier-protein] synthase III (335 aa).

Active-site residues include cysteine 120 and histidine 261. The interval 262 to 266 (QANER) is ACP-binding. Residue asparagine 291 is part of the active site.

The protein belongs to the thiolase-like superfamily. FabH family. Homodimer.

The protein resides in the cytoplasm. The catalysed reaction is malonyl-[ACP] + acetyl-CoA + H(+) = 3-oxobutanoyl-[ACP] + CO2 + CoA. Its pathway is lipid metabolism; fatty acid biosynthesis. Catalyzes the condensation reaction of fatty acid synthesis by the addition to an acyl acceptor of two carbons from malonyl-ACP. Catalyzes the first condensation reaction which initiates fatty acid synthesis and may therefore play a role in governing the total rate of fatty acid production. Possesses both acetoacetyl-ACP synthase and acetyl transacylase activities. Its substrate specificity determines the biosynthesis of branched-chain and/or straight-chain of fatty acids. The protein is Beta-ketoacyl-[acyl-carrier-protein] synthase III of Chlamydia pneumoniae (Chlamydophila pneumoniae).